A 247-amino-acid polypeptide reads, in one-letter code: Anionic trypsin (247 aa).

Residues methionine 1–alanine 15 form the signal peptide. The propeptide at phenylalanine 16 to lysine 23 is activation peptide. The Peptidase S1 domain occupies isoleucine 24–alanine 244. 6 cysteine pairs are disulfide-bonded: cysteine 30/cysteine 160, cysteine 48/cysteine 64, cysteine 132/cysteine 233, cysteine 139/cysteine 206, cysteine 171/cysteine 185, and cysteine 196/cysteine 220. The active-site Charge relay system is histidine 63. Ca(2+) contacts are provided by glutamate 75, asparagine 77, valine 80, and glutamate 85. Catalysis depends on aspartate 107, which acts as the Charge relay system. Serine 200 (charge relay system) is an active-site residue.

It belongs to the peptidase S1 family. The cofactor is Ca(2+). Not sulfated on tyrosine residue(s).

It is found in the secreted. The protein resides in the extracellular space. It carries out the reaction Preferential cleavage: Arg-|-Xaa, Lys-|-Xaa.. The chain is Anionic trypsin from Bos taurus (Bovine).